Reading from the N-terminus, the 160-residue chain is H/ACA ribonucleoprotein complex subunit 2 (160 aa).

Ser15 bears the Phosphoserine mark. Phosphothreonine is present on Thr23.

The protein belongs to the eukaryotic ribosomal protein eL8 family. In terms of assembly, component of the box H/ACA small nucleolar ribonucleoprotein (H/ACA snoRNP) complex consisting of Nop60B, Gar1, NPH2 and Nop10, and associated with H/ACA-type snoRNAs.

The protein resides in the nucleus. It is found in the nucleolus. In terms of biological role, component of the box H/ACA small nucleolar ribonucleoprotein (H/ACA snoRNP) complex, which catalyzes pseudouridylation of rRNA. This involves the isomerization of uridine such that the ribose is subsequently attached to C5, instead of the normal N1. Pseudouridine ('psi') residues may serve to stabilize the conformation of rRNAs. Required for ribosome biogenesis. H/ACA snoRNP complex-dependent ribosome biogenesis is important in female germline cell differentiation during oogenesis. The sequence is that of H/ACA ribonucleoprotein complex subunit 2 from Drosophila melanogaster (Fruit fly).